The chain runs to 776 residues: Glutathione biosynthesis bifunctional protein GshAB (776 aa).

The tract at residues 1-354 (MIKLDMTILD…QLADENENNI (354 aa)) is glutamate--cysteine ligase. One can recognise an ATP-grasp domain in the interval 521–775 (KLVLAENNIR…IGDKILDFLF (255 aa)). 548–606 (SLFKDKQIVVKPKSTNYGWGISIFKNKFTTEDYQEALNIAFSYDSSVIIEEFIPGDEFR) provides a ligand contact to ATP. Mg(2+) contacts are provided by D728, E745, and N747. Residues D728, E745, and N747 each contribute to the Mn(2+) site.

The protein in the N-terminal section; belongs to the glutamate--cysteine ligase type 1 family. Type 2 subfamily. As to quaternary structure, monomer. Requires Mg(2+) as cofactor. Mn(2+) serves as cofactor.

It catalyses the reaction L-cysteine + L-glutamate + ATP = gamma-L-glutamyl-L-cysteine + ADP + phosphate + H(+). It carries out the reaction gamma-L-glutamyl-L-cysteine + glycine + ATP = glutathione + ADP + phosphate + H(+). Its pathway is sulfur metabolism; glutathione biosynthesis; glutathione from L-cysteine and L-glutamate: step 1/2. It functions in the pathway sulfur metabolism; glutathione biosynthesis; glutathione from L-cysteine and L-glutamate: step 2/2. Its function is as follows. Synthesizes glutathione from L-glutamate and L-cysteine via gamma-L-glutamyl-L-cysteine. The protein is Glutathione biosynthesis bifunctional protein GshAB of Listeria welshimeri serovar 6b (strain ATCC 35897 / DSM 20650 / CCUG 15529 / CIP 8149 / NCTC 11857 / SLCC 5334 / V8).